Consider the following 250-residue polypeptide: Lectin 1 (250 aa).

Asn119 carries N-linked (GlcNAc...) asparagine; partial glycosylation. Mn(2+) contacts are provided by Glu128 and Asp130. The Ca(2+) site is built by Asp130, Tyr132, Asn138, and Asp141. Asp141 and His146 together coordinate Mn(2+).

Belongs to the leguminous lectin family.

Di-N-acetylchitobiose specific lectin. The sequence is that of Lectin 1 from Laburnum alpinum (Scotch laburnum).